The following is a 191-amino-acid chain: Probable nicotinate-nucleotide adenylyltransferase (191 aa).

It belongs to the NadD family.

The enzyme catalyses nicotinate beta-D-ribonucleotide + ATP + H(+) = deamido-NAD(+) + diphosphate. The protein operates within cofactor biosynthesis; NAD(+) biosynthesis; deamido-NAD(+) from nicotinate D-ribonucleotide: step 1/1. In terms of biological role, catalyzes the reversible adenylation of nicotinate mononucleotide (NaMN) to nicotinic acid adenine dinucleotide (NaAD). This Staphylococcus epidermidis (strain ATCC 12228 / FDA PCI 1200) protein is Probable nicotinate-nucleotide adenylyltransferase.